Reading from the N-terminus, the 398-residue chain is Nicotinate phosphoribosyltransferase (398 aa).

Residue histidine 214 is modified to Phosphohistidine; by autocatalysis.

Belongs to the NAPRTase family. In terms of processing, transiently phosphorylated on a His residue during the reaction cycle. Phosphorylation strongly increases the affinity for substrates and increases the rate of nicotinate D-ribonucleotide production. Dephosphorylation regenerates the low-affinity form of the enzyme, leading to product release.

It catalyses the reaction nicotinate + 5-phospho-alpha-D-ribose 1-diphosphate + ATP + H2O = nicotinate beta-D-ribonucleotide + ADP + phosphate + diphosphate. Its pathway is cofactor biosynthesis; NAD(+) biosynthesis; nicotinate D-ribonucleotide from nicotinate: step 1/1. In terms of biological role, catalyzes the synthesis of beta-nicotinate D-ribonucleotide from nicotinate and 5-phospho-D-ribose 1-phosphate at the expense of ATP. This chain is Nicotinate phosphoribosyltransferase, found in Xanthomonas campestris pv. campestris (strain B100).